A 73-amino-acid chain; its full sequence is Metallothionein (73 aa).

Residues C15, C20, C26, C28, C32, C34, C39, C46, C48, C52, C54, C58, C64, C66, C70, and C72 each contribute to the Cd(2+) site.

The protein belongs to the metallothionein superfamily. Type 2 family.

In terms of biological role, the metallothioneins are involved in the cellular sequestration of toxic metal ions. In Dreissena polymorpha (Zebra mussel), this protein is Metallothionein.